Here is a 1116-residue protein sequence, read N- to C-terminus: Surface layer protein (1116 aa).

A signal peptide spans 1-53 (MQDSGFKKKDRSTNIPQEQFVYTRGGEHKVMKKVVNSVLASALAITVAPMAFA). SLH domains lie at 54 to 117 (AEDT…KLAQ), 118 to 181 (FNTT…RGVW), and 182 to 231 (PNSM…YGTD).

The protein resides in the secreted. The protein localises to the cell wall. It localises to the S-layer. This is Surface layer protein from Brevibacillus choshinensis.